Reading from the N-terminus, the 232-residue chain is MKRSKAYRAAAEKVNLDQLYSPEEALALVASGASAKFDETVDVAIRLGVDPKKADQMVRGTVNLPHGTGKTTRVLVFATGEKAEAAREAGADEVGDDDLIAKVQGGYLDFDSVVATPDMMGKVGRLGRVLGPRGLMPNPKTGTVTMDVAKAVSDIKGGKIEFRTDRYANLHFLIGKVSFGSEKLAENYFAALDEILRLKPNAAKGRYLRKITVSSTMGPGVQIDPVAARDAD.

It belongs to the universal ribosomal protein uL1 family. In terms of assembly, part of the 50S ribosomal subunit.

Binds directly to 23S rRNA. The L1 stalk is quite mobile in the ribosome, and is involved in E site tRNA release. Its function is as follows. Protein L1 is also a translational repressor protein, it controls the translation of the L11 operon by binding to its mRNA. This chain is Large ribosomal subunit protein uL1, found in Cutibacterium acnes (strain DSM 16379 / KPA171202) (Propionibacterium acnes).